We begin with the raw amino-acid sequence, 1429 residues long: Probable ATP-dependent RNA helicase spindle-E (1429 aa).

The Helicase ATP-binding domain occupies 121 to 288 (VNAINTHQVV…FSTKVSVPPV (168 aa)). Residue 134–141 (GETGCGKT) participates in ATP binding. The short motif at 234-237 (DEVH) is the DEAH box element. Positions 349-521 (QSEQSYDDAK…NSVLKAKLLD (173 aa)) constitute a Helicase C-terminal domain. The region spanning 933–996 (AGVLTKGMMV…RLMTKELLSQ (64 aa)) is the Tudor domain.

Belongs to the DEAD box helicase family. DEAH subfamily.

The protein resides in the cytoplasm. The catalysed reaction is ATP + H2O = ADP + phosphate + H(+). Its function is as follows. Probable ATP-binding RNA helicase which plays a central role during spermatogenesis and oogenesis by repressing transposable elements and preventing their mobilization, which is essential for the germline integrity. Acts via the piRNA metabolic process, which mediates the repression of transposable elements during meiosis by forming complexes composed of piRNAs and Piwi and govern the methylation and subsequent repression of transposons. Involved in the repression of LTR retrotransposon copia. Also involved in telomere regulation by repressing specialized telomeric retroelements HeT-A, TAHRE, and TART; Drosophila telomeres being maintained by transposition of specialized telomeric retroelements. Involved in telomeric trans-silencing, a repression mechanism by which a transposon or a transgene inserted in subtelomeric heterochromatin has the capacity to repress in trans in the female germline, a homologous transposon, or transgene located in euchromatin. Involved in the repression of testis-expressed Stellate genes by the homologous Su(Ste) repeats. Required for anteroposterior and dorsoventral axis formation during oogenesis. The protein is Probable ATP-dependent RNA helicase spindle-E (spn-E) of Drosophila ananassae (Fruit fly).